The sequence spans 1031 residues: Error-prone DNA polymerase (1031 aa).

It belongs to the DNA polymerase type-C family. DnaE2 subfamily.

It is found in the cytoplasm. The catalysed reaction is DNA(n) + a 2'-deoxyribonucleoside 5'-triphosphate = DNA(n+1) + diphosphate. Functionally, DNA polymerase involved in damage-induced mutagenesis and translesion synthesis (TLS). It is not the major replicative DNA polymerase. The protein is Error-prone DNA polymerase of Pseudomonas syringae pv. syringae (strain B728a).